A 193-amino-acid polypeptide reads, in one-letter code: Protein GrpE (193 aa).

Residues M1 to M40 are disordered. The segment covering L14–T25 has biased composition (polar residues).

The protein belongs to the GrpE family. Homodimer.

It localises to the cytoplasm. In terms of biological role, participates actively in the response to hyperosmotic and heat shock by preventing the aggregation of stress-denatured proteins, in association with DnaK and GrpE. It is the nucleotide exchange factor for DnaK and may function as a thermosensor. Unfolded proteins bind initially to DnaJ; upon interaction with the DnaJ-bound protein, DnaK hydrolyzes its bound ATP, resulting in the formation of a stable complex. GrpE releases ADP from DnaK; ATP binding to DnaK triggers the release of the substrate protein, thus completing the reaction cycle. Several rounds of ATP-dependent interactions between DnaJ, DnaK and GrpE are required for fully efficient folding. The sequence is that of Protein GrpE from Nitrosospira multiformis (strain ATCC 25196 / NCIMB 11849 / C 71).